We begin with the raw amino-acid sequence, 349 residues long: DNA-directed RNA polymerase subunit alpha (349 aa).

An alpha N-terminal domain (alpha-NTD) region spans residues 1 to 226 (MLIAQRPTLI…GLFGLAQELN (226 aa)). The segment at 241–349 (AALAADLALP…GAEFIETEQY (109 aa)) is alpha C-terminal domain (alpha-CTD). A disordered region spans residues 309–349 (KDSPPGFDPRQAVDTYGTDAYSPSFSDPSDDGAEFIETEQY). Acidic residues predominate over residues 336-349 (PSDDGAEFIETEQY).

This sequence belongs to the RNA polymerase alpha chain family. As to quaternary structure, homodimer. The RNAP catalytic core consists of 2 alpha, 1 beta, 1 beta' and 1 omega subunit. When a sigma factor is associated with the core the holoenzyme is formed, which can initiate transcription.

The catalysed reaction is RNA(n) + a ribonucleoside 5'-triphosphate = RNA(n+1) + diphosphate. Functionally, DNA-dependent RNA polymerase catalyzes the transcription of DNA into RNA using the four ribonucleoside triphosphates as substrates. The chain is DNA-directed RNA polymerase subunit alpha from Frankia casuarinae (strain DSM 45818 / CECT 9043 / HFP020203 / CcI3).